Consider the following 618-residue polypeptide: Matrix metalloproteinase-24 (618 aa).

The N-terminal stretch at 1 to 41 (MPRSRGGRAAPGQASRWSGWRAPGRLLPLLPALCCLAAAAG) is a signal peptide. The propeptide occupies 42–128 (AGKPAGADAP…HLSRRRRNKR (87 aa)). At 42–575 (AGKPAGADAP…IDDVPGSVNA (534 aa)) the chain is on the extracellular side. Positions 110 to 117 (PRCGVPDH) match the Cysteine switch motif. Zn(2+) contacts are provided by cysteine 112 and histidine 255. The active site involves glutamate 256. Zn(2+) contacts are provided by histidine 259 and histidine 265. The tract at residues 296 to 352 (QKIYGPPAEPLEPTRPLPTLPVRRIHSPSERKHERHPRPPRPPLGDRPSTPGAKPNI) is disordered. Pro residues predominate over residues 302–314 (PAEPLEPTRPLPT). 4 Hemopexin repeats span residues 350-398 (PNIC…WKGL), 399-444 (PARI…GSCL), 446-494 (REGI…KGIP), and 495-542 (QAPQ…WMGC). Cysteine 353 and cysteine 542 are joined by a disulfide. The chain crosses the membrane as a helical span at residues 576-596 (VAVVVPCTLSLCLLVLLYTIF). Residues 597–618 (QFKNKAGPQPVTYYKRPVQEWV) lie on the Cytoplasmic side of the membrane. The PDZ-binding signature appears at 616–618 (EWV).

Belongs to the peptidase M10A family. Interacts with GRIP1 and GRIP2. Interacts (via PDZ-binding motif) with APBA3 (via PDZ domain). Zn(2+) serves as cofactor. The cofactor is Ca(2+). Cleaved by a furin endopeptidase in the trans-Golgi network. As to expression, mainly expressed in neuronal cells of both central and peripheral nervous systems. Expressed by CGRP-containing peptidergic nociceptors in dorsal root ganglia. Expressed in adult neural stem cell and ependymocytes. Expressed at low level in testis.

It is found in the cell membrane. It localises to the golgi apparatus. The protein resides in the trans-Golgi network membrane. Its subcellular location is the secreted. The protein localises to the extracellular space. It is found in the extracellular matrix. In terms of biological role, metalloprotease that mediates cleavage of N-cadherin (CDH2) and acts as a regulator of neuro-immune interactions and neural stem cell quiescence. Involved in cell-cell interactions between nociceptive neurites and mast cells, possibly by mediating cleavage of CDH2, thereby acting as a mediator of peripheral thermal nociception and inflammatory hyperalgesia. Key regulator of neural stem cells quiescence by mediating cleavage of CDH2, affecting CDH2-mediated anchorage of neural stem cells to ependymocytes in the adult subependymal zone, leading to modulate their quiescence. May play a role in axonal growth. Able to activate progelatinase A. May also be a proteoglycanase involved in degradation of proteoglycans, such as dermatan sulfate and chondroitin sulfate proteoglycans. Cleaves partially fibronectin, but not collagen type I, nor laminin. The chain is Matrix metalloproteinase-24 (Mmp24) from Mus musculus (Mouse).